We begin with the raw amino-acid sequence, 294 residues long: Bifunctional protein FolD (294 aa).

Residues 166 to 168 (GRS), Ser-191, and Ile-232 each bind NADP(+).

It belongs to the tetrahydrofolate dehydrogenase/cyclohydrolase family. Homodimer.

The catalysed reaction is (6R)-5,10-methylene-5,6,7,8-tetrahydrofolate + NADP(+) = (6R)-5,10-methenyltetrahydrofolate + NADPH. It catalyses the reaction (6R)-5,10-methenyltetrahydrofolate + H2O = (6R)-10-formyltetrahydrofolate + H(+). It functions in the pathway one-carbon metabolism; tetrahydrofolate interconversion. Its function is as follows. Catalyzes the oxidation of 5,10-methylenetetrahydrofolate to 5,10-methenyltetrahydrofolate and then the hydrolysis of 5,10-methenyltetrahydrofolate to 10-formyltetrahydrofolate. The chain is Bifunctional protein FolD from Afipia carboxidovorans (strain ATCC 49405 / DSM 1227 / KCTC 32145 / OM5) (Oligotropha carboxidovorans).